Here is a 74-residue protein sequence, read N- to C-terminus: Toxin Td6 (74 aa).

The signal sequence occupies residues 1 to 8 (IGMIVECE). The 63-residue stretch at 9-71 (KEGYLMEANG…IWDSATNTCG (63 aa)) folds into the LCN-type CS-alpha/beta domain. Intrachain disulfides connect Cys19–Cys70, Cys23–Cys45, Cys31–Cys51, and Cys35–Cys53. Residue Arg72 is modified to Arginine amide.

It belongs to the long (4 C-C) scorpion toxin superfamily. Sodium channel inhibitor family. Beta subfamily. As to expression, expressed by the venom gland.

The protein localises to the secreted. Its function is as follows. Beta toxins bind voltage-independently at site-4 of sodium channels (Nav) and shift the voltage of activation toward more negative potentials thereby affecting sodium channel activation and promoting spontaneous and repetitive firing. The sequence is that of Toxin Td6 from Tityus discrepans (Venezuelan scorpion).